We begin with the raw amino-acid sequence, 332 residues long: MSLHLSNVILHQLCKNDQDELVVKLRPASLENDASTENLVAELHRVFHSKAGKGFGSFQSDSEFQFWLQEMRKGERDFYDFSQISANRLKEELIKYPFADEGILVFAEYQSLATDYLFIGILPMNQSLKVTEGLDISATDYLDITKMDIAARIDLSSYETDKESNRYLQYIKGRVGRKVADFFLDFLQADIGLDTKQQNLVLMQAVDDFCADSKLEKQEVNEYKKQVYNYCNEQIKSGEEVQISELSGELPPSQDGTSFMDFTKEQGYELEESFPGDRSTVRKLTKYVGAGGGLNISFDSLLLGERIFYDPETDTLTIKGTPPNLKDQLSRN.

Belongs to the YejK family.

The protein localises to the cytoplasm. Its subcellular location is the nucleoid. This Vibrio parahaemolyticus serotype O3:K6 (strain RIMD 2210633) protein is Nucleoid-associated protein VP2128.